The chain runs to 709 residues: Leucine-rich repeat and calponin homology domain-containing protein 1 (709 aa).

A compositionally biased stretch (basic residues) spans 24–37 (LHQHHQHHQHHQHH). The tract at residues 24-49 (LHQHHQHHQHHQHHGGTGGTGFNLPL) is disordered. 9 LRR repeats span residues 60–83 (AANS…TAPG), 86–108 (LSDT…ELCQ), 109–131 (FVSL…AIVN), 132–155 (LQML…LCGL), 157–176 (LKVL…EIGQ), 177–199 (LKQL…QIGQ), 200–223 (LKSL…LVDL), 225–244 (LVKF…CFRE), and 245–268 (MKQL…ICTK). 2 stretches are compositionally biased toward basic and acidic residues: residues 301-312 (HQHVEDSKKDSD) and 381-390 (QEREQLAGRA). The segment at 301 to 390 (HQHVEDSKKD…QEREQLAGRA (90 aa)) is disordered. A phosphoserine mark is found at S395, S518, and S522. The disordered stretch occupies residues 504 to 526 (SNGSQYSPNEIRENSPSVSPTAN). T581 is subject to Phosphothreonine. Residues 589–702 (MREEKELVEQ…TTVQALLDVT (114 aa)) enclose the Calponin-homology (CH) domain.

As to quaternary structure, interacts (via LRR repeats) with unphosphorylated DOCK8 (via DHR-2 domain); the interaction prevents the association between DOCK8 and CDC42.

The protein resides in the cytoplasm. Acts as a negative regulator of GTPase CDC42 by sequestering CDC42-guanine exchange factor DOCK8. Probably by preventing CDC42 activation, negatively regulates CD4(+) T-cell migration in response to chemokine stimulation. The sequence is that of Leucine-rich repeat and calponin homology domain-containing protein 1 (Lrch1) from Mus musculus (Mouse).